The primary structure comprises 197 residues: UPF0056 inner membrane protein YhgN (197 aa).

Residues 1-3 (MNE) are Periplasmic-facing. Residues 4–24 (IISAAVLLILIMDPLGNLPIF) traverse the membrane as a helical segment. At 25 to 44 (MSVLKHTEPKRRRAIMVREL) the chain is on the cytoplasmic side. The helical transmembrane segment at 45 to 65 (LIALLVMLVFLFAGEKILAFL) threads the bilayer. Topologically, residues 66-71 (SLRAET) are periplasmic. The chain crosses the membrane as a helical span at residues 72-92 (VSISGGIILFLIAIKMIFPSA). The Cytoplasmic segment spans residues 93 to 105 (SGNSSGLPAGEEP). The chain crosses the membrane as a helical span at residues 106–126 (FIVPLAIPLVAGPTILATLML). At 127–138 (LSHQYPNQMGHL) the chain is on the periplasmic side. The chain crosses the membrane as a helical span at residues 139–159 (VIALLLAWGGTFVILLQSSLF). Over 160–173 (LRLLGEKGVNALER) the chain is Cytoplasmic. A helical transmembrane segment spans residues 174-194 (LMGLILVMMATQMFLDGIRMW). Residues 195–197 (MKG) are Periplasmic-facing.

Belongs to the UPF0056 (MarC) family.

It localises to the cell inner membrane. The sequence is that of UPF0056 inner membrane protein YhgN (yhgN) from Escherichia coli O157:H7.